Here is a 345-residue protein sequence, read N- to C-terminus: Serine proteinase inhibitor 2 (345 aa).

It belongs to the serpin family. Poxviruses subfamily.

The protein localises to the host cytoplasm. In terms of biological role, viral serpin that inhibits both cysteine and serine proteinases involved in the regulation of host inflammatory and apoptosis processes. Major anti-apoptotic protein which inhibits both intrinsic and extrinsic pathways and strongly cleaves host CASP1 and CASP8 but is a rather poor inhibitor of host CASP3. Prevents the proteolytic activity of host interleukin-1-beta converting enzyme (ICE) and ICE-like enzymes. Can also block apoptosis through host tumor necrosis factor (TNF) receptor. The inhibition of host ICE is an example of a 'cross-class' interaction, in which a serpin inhibits a non-serine proteinase. Also inhibits granzyme B. The sequence is that of Serine proteinase inhibitor 2 (OPG199) from Rabbitpox virus (strain Utrecht) (RPV).